Reading from the N-terminus, the 99-residue chain is Large ribosomal subunit protein uL23 (99 aa).

The protein belongs to the universal ribosomal protein uL23 family. Part of the 50S ribosomal subunit. Contacts protein L29, and trigger factor when it is bound to the ribosome.

Functionally, one of the early assembly proteins it binds 23S rRNA. One of the proteins that surrounds the polypeptide exit tunnel on the outside of the ribosome. Forms the main docking site for trigger factor binding to the ribosome. This Streptococcus suis (strain 98HAH33) protein is Large ribosomal subunit protein uL23.